The chain runs to 123 residues: Large ribosomal subunit protein bL12 (123 aa).

Belongs to the bacterial ribosomal protein bL12 family. In terms of assembly, homodimer. Part of the ribosomal stalk of the 50S ribosomal subunit. Forms a multimeric L10(L12)X complex, where L10 forms an elongated spine to which 2 to 4 L12 dimers bind in a sequential fashion. Binds GTP-bound translation factors.

Its function is as follows. Forms part of the ribosomal stalk which helps the ribosome interact with GTP-bound translation factors. Is thus essential for accurate translation. This is Large ribosomal subunit protein bL12 from Chromobacterium violaceum (strain ATCC 12472 / DSM 30191 / JCM 1249 / CCUG 213 / NBRC 12614 / NCIMB 9131 / NCTC 9757 / MK).